The primary structure comprises 159 residues: 6,7-dimethyl-8-ribityllumazine synthase (159 aa).

Residues tryptophan 28, alanine 59–glutamate 61, and cysteine 81–isoleucine 83 each bind 5-amino-6-(D-ribitylamino)uracil. Glycine 86–threonine 87 is a binding site for (2S)-2-hydroxy-3-oxobutyl phosphate. The active-site Proton donor is histidine 89. Asparagine 114 contacts 5-amino-6-(D-ribitylamino)uracil. Position 128 (arginine 128) interacts with (2S)-2-hydroxy-3-oxobutyl phosphate.

The protein belongs to the DMRL synthase family.

The enzyme catalyses (2S)-2-hydroxy-3-oxobutyl phosphate + 5-amino-6-(D-ribitylamino)uracil = 6,7-dimethyl-8-(1-D-ribityl)lumazine + phosphate + 2 H2O + H(+). It functions in the pathway cofactor biosynthesis; riboflavin biosynthesis; riboflavin from 2-hydroxy-3-oxobutyl phosphate and 5-amino-6-(D-ribitylamino)uracil: step 1/2. Catalyzes the formation of 6,7-dimethyl-8-ribityllumazine by condensation of 5-amino-6-(D-ribitylamino)uracil with 3,4-dihydroxy-2-butanone 4-phosphate. This is the penultimate step in the biosynthesis of riboflavin. The protein is 6,7-dimethyl-8-ribityllumazine synthase of Corynebacterium kroppenstedtii (strain DSM 44385 / JCM 11950 / CIP 105744 / CCUG 35717).